Here is a 320-residue protein sequence, read N- to C-terminus: ATP-dependent 6-phosphofructokinase (320 aa).

Position 12 (Gly12) interacts with ATP. ADP contacts are provided by residues 22 to 26 and 55 to 60; these read RGVVR and RYSVSD. ATP is bound by residues 73–74 and 103–106; these read RF and GDGS. Residue Asp104 coordinates Mg(2+). 126–128 contacts substrate; that stretch reads TID. Asp128 acts as the Proton acceptor in catalysis. Arg155 is a binding site for ADP. Substrate contacts are provided by residues Arg163 and 170–172; that span reads MGR. ADP-binding positions include 186-188, Lys212, and 214-216; these read GCE and KKH. Residues Glu223, Arg244, and 250–253 each bind substrate; that span reads HIQR.

The protein belongs to the phosphofructokinase type A (PFKA) family. ATP-dependent PFK group I subfamily. Prokaryotic clade 'B1' sub-subfamily. Homotetramer. Mg(2+) is required as a cofactor.

The protein resides in the cytoplasm. The catalysed reaction is beta-D-fructose 6-phosphate + ATP = beta-D-fructose 1,6-bisphosphate + ADP + H(+). It functions in the pathway carbohydrate degradation; glycolysis; D-glyceraldehyde 3-phosphate and glycerone phosphate from D-glucose: step 3/4. With respect to regulation, allosterically activated by ADP and other diphosphonucleosides, and allosterically inhibited by phosphoenolpyruvate. Functionally, catalyzes the phosphorylation of D-fructose 6-phosphate to fructose 1,6-bisphosphate by ATP, the first committing step of glycolysis. In Citrobacter koseri (strain ATCC BAA-895 / CDC 4225-83 / SGSC4696), this protein is ATP-dependent 6-phosphofructokinase.